The chain runs to 172 residues: Small ribosomal subunit protein uS5 (172 aa).

In terms of domain architecture, S5 DRBM spans 17–80 (LREKMISVNR…DEARRKMVKV (64 aa)).

This sequence belongs to the universal ribosomal protein uS5 family. Part of the 30S ribosomal subunit. Contacts proteins S4 and S8.

In terms of biological role, with S4 and S12 plays an important role in translational accuracy. Its function is as follows. Located at the back of the 30S subunit body where it stabilizes the conformation of the head with respect to the body. In Cupriavidus pinatubonensis (strain JMP 134 / LMG 1197) (Cupriavidus necator (strain JMP 134)), this protein is Small ribosomal subunit protein uS5.